The primary structure comprises 421 residues: SH2 domain-containing protein 4A (421 aa).

A phosphoserine mark is found at serine 117 and serine 123. The interval 132-271 (DLQAMKKTEP…FLQPLGIPPK (140 aa)) is disordered. Composition is skewed to basic and acidic residues over residues 163 to 201 (TRKDDKAQTKPVKEKDHEEMKQTEDEKTKQIYKSWKEDS) and 211 to 230 (KAADEKRRSLAKQAREDYKR). A Phosphoserine modification is found at serine 232. The 93-residue stretch at 315–407 (WFHGILTLKK…LGKELLLYPC (93 aa)) folds into the SH2 domain.

In terms of assembly, interacts with ESR1. In the kidney, expressed only in the glomerulus. Expressed in T-cells, B-cells, macrophages and dendritic cells (at protein level). In adult, highest levels are found in muscle and lung with lower levels in kidney.

It is found in the cytoplasm. Inhibits estrogen-induced cell proliferation by competing with PLCG for binding to ESR1, blocking the effect of estrogen on PLCG and repressing estrogen-induced proliferation. May play a role in T-cell development and function. The sequence is that of SH2 domain-containing protein 4A (Sh2d4a) from Mus musculus (Mouse).